A 363-amino-acid chain; its full sequence is Cytochrome b (363 aa).

4 consecutive transmembrane segments (helical) span residues Val-23–Phe-43, Trp-67–Ile-89, Ser-102–Val-122, and Phe-164–Tyr-184. Residues His-73 and His-87 each coordinate heme b. Residues His-168 and His-182 each contribute to the heme b site. His-187 contributes to the a ubiquinone binding site. Transmembrane regions (helical) follow at residues Ile-210–Gly-230, Val-271–Ile-291, Arg-309–Gly-329, and Val-332–Val-352.

This sequence belongs to the cytochrome b family. As to quaternary structure, the main subunits of complex b-c1 are: cytochrome b, cytochrome c1 and the Rieske protein. Heme b serves as cofactor.

Its subcellular location is the mitochondrion inner membrane. In terms of biological role, component of the ubiquinol-cytochrome c reductase complex (complex III or cytochrome b-c1 complex) that is part of the mitochondrial respiratory chain. The b-c1 complex mediates electron transfer from ubiquinol to cytochrome c. Contributes to the generation of a proton gradient across the mitochondrial membrane that is then used for ATP synthesis. This Theileria parva (East coast fever infection agent) protein is Cytochrome b (MT-CYB).